The sequence spans 206 residues: ATP phosphoribosyltransferase (206 aa).

This sequence belongs to the ATP phosphoribosyltransferase family. Short subfamily. Heteromultimer composed of HisG and HisZ subunits.

The protein resides in the cytoplasm. The enzyme catalyses 1-(5-phospho-beta-D-ribosyl)-ATP + diphosphate = 5-phospho-alpha-D-ribose 1-diphosphate + ATP. It functions in the pathway amino-acid biosynthesis; L-histidine biosynthesis; L-histidine from 5-phospho-alpha-D-ribose 1-diphosphate: step 1/9. In terms of biological role, catalyzes the condensation of ATP and 5-phosphoribose 1-diphosphate to form N'-(5'-phosphoribosyl)-ATP (PR-ATP). Has a crucial role in the pathway because the rate of histidine biosynthesis seems to be controlled primarily by regulation of HisG enzymatic activity. This chain is ATP phosphoribosyltransferase, found in Thermus thermophilus (strain ATCC 27634 / DSM 579 / HB8).